A 105-amino-acid chain; its full sequence is Phosphoribosyl-AMP cyclohydrolase (105 aa).

Asp-72 is a Mg(2+) binding site. A Zn(2+)-binding site is contributed by Cys-73. Mg(2+)-binding residues include Asp-74 and Asp-76. Residues Cys-89 and Cys-96 each coordinate Zn(2+).

The protein belongs to the PRA-CH family. Homodimer. The cofactor is Mg(2+). Zn(2+) serves as cofactor.

The protein localises to the cytoplasm. The catalysed reaction is 1-(5-phospho-beta-D-ribosyl)-5'-AMP + H2O = 1-(5-phospho-beta-D-ribosyl)-5-[(5-phospho-beta-D-ribosylamino)methylideneamino]imidazole-4-carboxamide. It functions in the pathway amino-acid biosynthesis; L-histidine biosynthesis; L-histidine from 5-phospho-alpha-D-ribose 1-diphosphate: step 3/9. Its function is as follows. Catalyzes the hydrolysis of the adenine ring of phosphoribosyl-AMP. This Listeria monocytogenes serotype 4a (strain HCC23) protein is Phosphoribosyl-AMP cyclohydrolase.